The following is a 159-amino-acid chain: MNIKIVCVGKLKEKYFKDGIAEYQKRLSRFAKVEIVQVPDEKAPESLSPAQMEEVKKREGERILSKIKDKEYVYVLAIKGKERASEEFAKELKNLGTYGHSDITFVIGGSLGTSDAVNKRANDLFSFGKLTMPHQLMRLVLIEQIYRAFMINSGSPYHK.

S-adenosyl-L-methionine is bound by residues L76, G108, and 127-132; that span reads FGKLTM.

Belongs to the RNA methyltransferase RlmH family. Homodimer.

Its subcellular location is the cytoplasm. It carries out the reaction pseudouridine(1915) in 23S rRNA + S-adenosyl-L-methionine = N(3)-methylpseudouridine(1915) in 23S rRNA + S-adenosyl-L-homocysteine + H(+). In terms of biological role, specifically methylates the pseudouridine at position 1915 (m3Psi1915) in 23S rRNA. The polypeptide is Ribosomal RNA large subunit methyltransferase H (Lactobacillus delbrueckii subsp. bulgaricus (strain ATCC 11842 / DSM 20081 / BCRC 10696 / JCM 1002 / NBRC 13953 / NCIMB 11778 / NCTC 12712 / WDCM 00102 / Lb 14)).